Here is a 212-residue protein sequence, read N- to C-terminus: Peptide methionine sulfoxide reductase MsrA (212 aa).

The active site involves Cys52.

This sequence belongs to the MsrA Met sulfoxide reductase family.

It catalyses the reaction L-methionyl-[protein] + [thioredoxin]-disulfide + H2O = L-methionyl-(S)-S-oxide-[protein] + [thioredoxin]-dithiol. The catalysed reaction is [thioredoxin]-disulfide + L-methionine + H2O = L-methionine (S)-S-oxide + [thioredoxin]-dithiol. Functionally, has an important function as a repair enzyme for proteins that have been inactivated by oxidation. Catalyzes the reversible oxidation-reduction of methionine sulfoxide in proteins to methionine. The polypeptide is Peptide methionine sulfoxide reductase MsrA (Shigella boydii serotype 18 (strain CDC 3083-94 / BS512)).